Reading from the N-terminus, the 392-residue chain is Metacaspase-1 (392 aa).

Over residues 1–14 the composition is skewed to polar residues; the sequence is MYPGSGNYSYNNRP. Positions 1-87 are disordered; it reads MYPGSGNYSY…PSSIQQGNGQ (87 aa). Over residues 41–51 the composition is skewed to low complexity; it reads QQQQYQDQYQG. The segment covering 53-63 has biased composition (polar residues); sequence NRGQYQGQYQD. Active-site residues include His-182 and Cys-238.

It belongs to the peptidase C14B family.

Involved in cell death (apoptosis). The sequence is that of Metacaspase-1 (MCA1) from Candida glabrata (strain ATCC 2001 / BCRC 20586 / JCM 3761 / NBRC 0622 / NRRL Y-65 / CBS 138) (Yeast).